The primary structure comprises 103 residues: Small ribosomal subunit protein uS10 (103 aa).

It belongs to the universal ribosomal protein uS10 family. Part of the 30S ribosomal subunit.

Functionally, involved in the binding of tRNA to the ribosomes. The sequence is that of Small ribosomal subunit protein uS10 from Pectobacterium atrosepticum (strain SCRI 1043 / ATCC BAA-672) (Erwinia carotovora subsp. atroseptica).